A 3907-amino-acid polypeptide reads, in one-letter code: A-kinase anchor protein 9 (3907 aa).

Over residues 1-14 (MEDEERQKKLEAGK) the composition is skewed to basic and acidic residues. The segment at 1–57 (MEDEERQKKLEAGKAKLAQFRQRKAQSDGQSPSKKQKKKRKTSSSKHDVSAHHDLNI) is disordered. The segment covering 34–44 (KKQKKKRKTSS) has biased composition (basic residues). Over residues 45-56 (SKHDVSAHHDLN) the composition is skewed to basic and acidic residues. 7 coiled-coil regions span residues 152–902 (DSPT…ELHL), 932–1010 (EVVE…ENVQ), 1088–1173 (QPSE…QTMK), 1241–1268 (ELQD…EEYN), 1324–1380 (KLSS…ESTV), 1422–1447 (VKEE…VAKV), and 1573–1647 (SMDA…DNEN). S153 carries the phosphoserine modification. S1327 carries the post-translational modification Phosphoserine. Positions 1682-1692 (STQTQNGNENQ) are enriched in low complexity. A disordered region spans residues 1682-1713 (STQTQNGNENQGEVEEQTFKEKELDRKPEDVP). The segment covering 1698-1711 (QTFKEKELDRKPED) has biased composition (basic and acidic residues). S1765 is modified (phosphoserine). Coiled coils occupy residues 1845–2443 (NISS…VEKI), 2532–2549 (ETEM…IVEE), 2591–2764 (QLRE…SKKA), 3061–3088 (LNCL…ADRR), 3120–3466 (ELLE…NLNE), and 3583–3685 (SLTE…NDSL). The tract at residues 2542–2555 (NLQKIVEEKVAAAL) is PKA-RII subunit binding domain. Positions 3377-3405 (RQQMEKDRQVHRKTLQTEQEANTEGQKKM) are disordered. S3690, S3842, S3865, and S3897 each carry phosphoserine.

Interacts with the regulatory region of protein kinase N (PKN), protein phosphatase 2A (PP2A), protein phosphatase 1 (PP1) and the immature non-phosphorylated form of PKC epsilon. Interacts with CIP4 and FNBP1. Interacts with chloride intracellular channel proteins CLIC1, CLIC4 and CLIC5. CSNK1D binding promotes its centrosomal subcellular location. Interacts with GM130/GOLGA2; leading to recruitment to the Golgi apparatus. Interacts with KCNQ1; targets protein kinase A (PKA) catalytic and regulatory subunits and protein phosphatase 1 (PP1), to the heterodimer KCNQ1-KCNE1. Interacts with PDE4DIP isoform 13/MMG8/SMYLE; this interaction stabilizes both proteins. In complex with PDE4DIP isoform 13, recruits CAMSAP2 to the Golgi apparatus. Forms a pericentrosomal complex with CDK5RAP2, EB1/MAPRE1 and PDE4DIP isoform 13; within this complex, MAPRE1 binding to CDK5RAP2 may be mediated by PDE4DIP. Interacts with MAPRE1 and MAPRE3. Interacts (via C-terminus) with CAMSAP2; this interaction is much stronger in the presence of PDE4DIP isoform 13/MMG8/SMYLE. Interacts with CAMSAP3. Interacts (via C-terminus) with the gamma-tubulin ring complex (gamma-TuRC), composed of gamma-tubulin, TUBGCP2, TUBGCP3, TUBGCP4, TUBGCP5 and TUBGCP6. Widely expressed. Isoform 4: Highly expressed in skeletal muscle and in pancreas.

The protein resides in the golgi apparatus. The protein localises to the cytoplasm. It is found in the cytoskeleton. Its subcellular location is the microtubule organizing center. It localises to the centrosome. Functionally, scaffolding protein that assembles several protein kinases and phosphatases on the centrosome and Golgi apparatus. Required to maintain the integrity of the Golgi apparatus. Required for microtubule nucleation at the cis-side of the Golgi apparatus. Required for association of the centrosomes with the poles of the bipolar mitotic spindle during metaphase. In complex with PDE4DIP isoform 13/MMG8/SMYLE, recruits CAMSAP2 to the Golgi apparatus and tethers non-centrosomal minus-end microtubules to the Golgi, an important step for polarized cell movement. In complex with PDE4DIP isoform 13/MMG8/SMYLE, EB1/MAPRE1 and CDK5RAP2, contributes to microtubules nucleation and extension also from the centrosome to the cell periphery. In terms of biological role, associated with the N-methyl-D-aspartate receptor and is specifically found in the neuromuscular junction (NMJ) as well as in neuronal synapses, suggesting a role in the organization of postsynaptic specializations. This is A-kinase anchor protein 9 (AKAP9) from Homo sapiens (Human).